The chain runs to 130 residues: Protein ApaG (130 aa).

The 125-residue stretch at S3–S127 folds into the ApaG domain.

This Rhodospirillum centenum (strain ATCC 51521 / SW) protein is Protein ApaG.